The primary structure comprises 146 residues: 3-hydroxyacyl-[acyl-carrier-protein] dehydratase FabZ (146 aa).

H47 is an active-site residue.

This sequence belongs to the thioester dehydratase family. FabZ subfamily.

It is found in the cytoplasm. It catalyses the reaction a (3R)-hydroxyacyl-[ACP] = a (2E)-enoyl-[ACP] + H2O. In terms of biological role, involved in unsaturated fatty acids biosynthesis. Catalyzes the dehydration of short chain beta-hydroxyacyl-ACPs and long chain saturated and unsaturated beta-hydroxyacyl-ACPs. The chain is 3-hydroxyacyl-[acyl-carrier-protein] dehydratase FabZ from Methylococcus capsulatus (strain ATCC 33009 / NCIMB 11132 / Bath).